We begin with the raw amino-acid sequence, 348 residues long: Phosphatidylglycerophosphate phosphatase 1, chloroplastic/mitochondrial (348 aa).

The transit peptide at 1-58 (MQTPSMAASTTSYYPIPKSFLLSPPRHKRNPNLISCSTKPICSPPPPSSSSSSPLQTT) directs the protein to the chloroplast and mitochondrion. Residues 17 to 67 (PKSFLLSPPRHKRNPNLISCSTKPICSPPPPSSSSSSPLQTTTTHRSQKQN) are disordered. The span at 55-67 (LQTTTTHRSQKQN) shows a compositional bias: polar residues. Residues 184–188 (DKDNT) carry the Phosphoryl acceptor motif.

It belongs to the HAD-like hydrolase superfamily. Requires Mg(2+) as cofactor. Mainly expressed in inflorescences (especially in pollen) and, to a lower extent, in leaves, stems and siliques, as well as, at low levels, in roots. Mostly expressed in hypocotyl, vasculatures, trichomes, guard cells and stigmas.

It localises to the plastid. The protein localises to the chloroplast. It is found in the mitochondrion. The enzyme catalyses a 1,2-diacyl-sn-glycero-3-phospho-(1'-sn-glycero-3'-phosphate) + H2O = a 1,2-diacyl-sn-glycero-3-phospho-(1'-sn-glycerol) + phosphate. It functions in the pathway phospholipid metabolism; phosphatidylglycerol biosynthesis; phosphatidylglycerol from CDP-diacylglycerol: step 2/2. Functionally, phosphatidylglycerophosphate (PGP) phosphatase involved in the biosynthesis of phosphatidylglycerol (PG), a phosphoglycerolipid predominantly present in chloroplastic thylakoid membranes and which has important photosynthetic function; seems to use PGP 34:3, PGP 34:2 and PGP 34:1 as substrates. Required for thylakoid membranes development and chloroplast function. Necessary for normal cell growth. Required for root growth and columella cells organization. This is Phosphatidylglycerophosphate phosphatase 1, chloroplastic/mitochondrial from Arabidopsis thaliana (Mouse-ear cress).